The chain runs to 1444 residues: MTAKEEEKQERFQLLMTQIGLQDVTTYEEFTKDAKIEKLVADKKNKTWQFHLHVPQIFPAALFHMMDVGMKRAFSQIAETEMQIVPENQTINETLIQEYWNLIVEPIGKQSPMIGKLLMEQKPTFKEPHFIEVAVHNDMEEATIQQRFQAKIIENYGKAGFPRLAMKMHMLDQSETDEYKAFAQAKQEEDQKKAAEAVQVMQKRQAEGQNGSANAAPLTGPFQIGYKIKDDEEIKRLGDVYDEERRITVQGLIFATEIRELRSGRSLLQFKITDYTSSMIIKMFSRDNEDAAMFQNLKKGMWVKVRGSVQNDTFVRDLIMMAQDINEIAGVKRLDTAEEKRAELHLHSPMSQMDATSSVDSLFKQAADWGHKAIAITDHSVAQSFPEAYGAGQKYGLKVIFGIEANLIDDGVPIAYNDQHIALEDATYCVFDVETTGLSAVYDTIIELAGVKMKNGEIIDKFEAFIDPGHPLSATTINLTGITDDMVKGSDPIDVVLKQFREWSGDDILVAHNASFDMGFINTAYEKVGLEKAKNAVVDTLELARFLYPHFKNHRLNTLTKKFNIILEQHHRAVFDAEATAYLAWKLIKDAKEMHDIEFHDSLNDYMGEGDAYKRARPFHATIYAQTDVGLKNLFKLITMSNINYFYRVPRIPRSQLKKMREGLIIGTACSQGELFEAMMQKGMQAAEKVAEFYDFIEVQPKPVYAPLIERELVRDEKALEEILKNIVRVGEKTGKPVVATGNVHYKDPVDKIYRKILIHSQGGANPLNRAELPDVHFRSTDEMLKEFAFLGEEKAKEIVVTNSNLVVDWMDDLKPIKDELYTPKIDGAEDEVRNMSYGMAHQLYGEKLPEIVEARLEKELKSIIGHGFAVIYLISHKLVKKSLVDGYLVGSRGSVGSSFVATMTEITEVNPLPPHYLCPNCKDSEFFDDGSVGSGFDLPDKDCPHCGTPYQKEGQDIPFETFLGFKGDKVPDIDLNFSGDYQPVAHAYTKEIFGEDYVFRAGTIGTVAEKTAFGYVRNYERDMNMTIRGAEVDRLVAGCTGVKRTTGQHPGGIIVIPDYMDVYDFTPVQFPADATDSEWKTTHFDFHSIHDNVLKLDILGHDDPTAIRMLQDLSGIDPKTIPTDDPDVMKLFGSTESLGVKPADIDSKTGTLGIPEFGTRFVRQMLEQTKPTTFSELVQISGLSHGTDVWLGNAEELIKNKTCELPDVIGCRDDIMVFLIYQGLESSLAFKIMESVRKGKGLTEEMEEAMIANKVPLWYIESCKKIKYMFPKAHAAAYVLMAVRIAYFKVHHPLYFYATYFTVRADDFDLTSMVNGKEAVKATMKEVNDKGMEASTKEKNLLTVLEIANEMLARGFHFQKVDLYKSSADEFIIDGDSLIPPFNAIPSLGTNVAKQIVAARENGEFLSKEDLQQRGKVSKTIIQYMDDQGCLEGLPDQNQLSLF.

One can recognise an Exonuclease domain in the interval Y428 to A584.

The protein belongs to the DNA polymerase type-C family. PolC subfamily.

The protein localises to the cytoplasm. The enzyme catalyses DNA(n) + a 2'-deoxyribonucleoside 5'-triphosphate = DNA(n+1) + diphosphate. Its function is as follows. Required for replicative DNA synthesis. This DNA polymerase also exhibits 3' to 5' exonuclease activity. This chain is DNA polymerase III PolC-type, found in Listeria innocua serovar 6a (strain ATCC BAA-680 / CLIP 11262).